The chain runs to 631 residues: ESX-3 secretion system protein EccA3 (631 aa).

An ATP-binding site is contributed by 385-392; sequence GPPGTGKT.

It belongs to the CbxX/CfxQ family. In terms of assembly, part of the ESX-3 / type VII secretion system (T7SS), which is composed of cytosolic and membrane components.

It is found in the cytoplasm. Its function is as follows. Part of the ESX-3 specialized secretion system, which is important for iron and zinc uptake or homeostasis. EccA3 exhibits ATPase activity and may provide energy for the export of ESX-3 substrates. This is ESX-3 secretion system protein EccA3 from Mycobacterium tuberculosis (strain CDC 1551 / Oshkosh).